The primary structure comprises 314 residues: 2,3-dihydroxyphenylpropionate/2,3-dihydroxicinnamic acid 1,2-dioxygenase (314 aa).

H115 serves as the catalytic Proton donor. Residue H179 is the Proton acceptor of the active site.

This sequence belongs to the LigB/MhpB extradiol dioxygenase family. In terms of assembly, homotetramer. It depends on Fe(2+) as a cofactor.

It catalyses the reaction 3-(2,3-dihydroxyphenyl)propanoate + O2 = (2Z,4E)-2-hydroxy-6-oxonona-2,4-dienedioate + H(+). The catalysed reaction is (2E)-3-(2,3-dihydroxyphenyl)prop-2-enoate + O2 = (2Z,4E,7E)-2-hydroxy-6-oxonona-2,4,7-trienedioate + H(+). It participates in aromatic compound metabolism; 3-phenylpropanoate degradation. Its function is as follows. Catalyzes the non-heme iron(II)-dependent oxidative cleavage of 2,3-dihydroxyphenylpropionic acid and 2,3-dihydroxicinnamic acid into 2-hydroxy-6-ketononadienedioate and 2-hydroxy-6-ketononatrienedioate, respectively. The chain is 2,3-dihydroxyphenylpropionate/2,3-dihydroxicinnamic acid 1,2-dioxygenase from Rhodococcus jostii (strain RHA1).